A 193-amino-acid polypeptide reads, in one-letter code: Xanthine phosphoribosyltransferase (193 aa).

Positions 20 and 27 each coordinate xanthine. Residue 128–132 coordinates 5-phospho-alpha-D-ribose 1-diphosphate; that stretch reads ANGQA. Lys-156 is a binding site for xanthine.

The protein belongs to the purine/pyrimidine phosphoribosyltransferase family. Xpt subfamily. In terms of assembly, homodimer.

It is found in the cytoplasm. It carries out the reaction XMP + diphosphate = xanthine + 5-phospho-alpha-D-ribose 1-diphosphate. It functions in the pathway purine metabolism; XMP biosynthesis via salvage pathway; XMP from xanthine: step 1/1. Functionally, converts the preformed base xanthine, a product of nucleic acid breakdown, to xanthosine 5'-monophosphate (XMP), so it can be reused for RNA or DNA synthesis. The sequence is that of Xanthine phosphoribosyltransferase from Streptococcus gordonii (strain Challis / ATCC 35105 / BCRC 15272 / CH1 / DL1 / V288).